The sequence spans 643 residues: Thread biopolymer filament subunit alpha (643 aa).

The span at 1 to 13 (MSISQTVSKSYTK) shows a compositional bias: polar residues. The tract at residues 1 to 34 (MSISQTVSKSYTKSVSRGGQGVSYSQSSSHKVGG) is disordered. The head stretch occupies residues 1 to 191 (MSISQTVSKS…PDTVQHTRIR (191 aa)). A compositionally biased stretch (low complexity) spans 14 to 31 (SVSRGGQGVSYSQSSSHK). The IF rod domain occupies 192–510 (EKQDLQTLNT…KLLDSEETRI (319 aa)). The coil 1A stretch occupies residues 193–227 (KQDLQTLNTKFANLVDQVRTLEQHNAILKAQISMI). A linker 1 region spans residues 228 to 240 (TSPSDTPEGPVNT). Positions 241–341 (AVVASTVTAT…YNARVREVQA (101 aa)) are coil 1B. The linker 12 stretch occupies residues 342–362 (AVTGGPTAAYSIRVDNTHQAI). The interval 363-381 (DLTTSLQEMKTHYEVLATK) is coil 2A. Residues 382-389 (SREEAFTQ) are linker 2. Residues 390-510 (VQPRIQEMAV…KLLDSEETRI (121 aa)) are coil 2B. The segment at 511 to 643 (SHGGGITITT…SSARSSSRIY (133 aa)) is tail. The tract at residues 622–643 (SRAGYSASRKSYSSARSSSRIY) is disordered.

Belongs to the intermediate filament family. Coiled-coil heterodimer of an alpha and a gamma subunit. Assemble into 10 nm filaments. Forms a massive, conical, intermediate filament biopolymer of approximately 60 cm.

Its subcellular location is the secreted. It localises to the extracellular space. In terms of biological role, released extracellularly into seawater and provides physical and biological defense against invasive organism by modulation of the viscoelastic properties of mucus. The chain is Thread biopolymer filament subunit alpha from Eptatretus stoutii (Pacific hagfish).